Here is a 216-residue protein sequence, read N- to C-terminus: Ras-related protein Rab-5C (216 aa).

10 residues coordinate GTP: S30, A31, G33, K34, S35, S36, H47, E48, T53, and G79. S35 serves as a coordination point for Mg(2+). 2 consecutive short sequence motifs (switch) follow at residues 45-57 (QFHE…IGAA) and 78-94 (AGQE…YRGA). T53 is a binding site for Mg(2+). S85 is modified (phosphoserine). Residues N134, K135, D137, A165, and K166 each coordinate GTP. A disordered region spans residues 185 to 216 (NEPQNAAGAPGRTRGVDLQESNPASRSQCCSN). The segment covering 203–216 (QESNPASRSQCCSN) has biased composition (polar residues). 2 S-geranylgeranyl cysteine lipidation sites follow: C213 and C214.

Belongs to the small GTPase superfamily. Rab family. In terms of assembly, interacts with EEA1 and INCA1. Interacts with GDI1, GDI2, CHML and CHM; phosphorylation at Ser-85 disrupts this interaction. Mg(2+) is required as a cofactor. Post-translationally, phosphorylation of Ser-85 in the switch II region by LRRK2 prevents the association of RAB regulatory proteins, including CHM, CHML and RAB GDP dissociation inhibitors GDI1 and GDI2.

Its subcellular location is the cell membrane. The protein resides in the early endosome membrane. It localises to the melanosome. It carries out the reaction GTP + H2O = GDP + phosphate + H(+). Regulated by guanine nucleotide exchange factors (GEFs) which promote the exchange of bound GDP for free GTP. Regulated by GTPase activating proteins (GAPs) which increase the GTP hydrolysis activity. Inhibited by GDP dissociation inhibitors (GDIs). The small GTPases Rab are key regulators of intracellular membrane trafficking, from the formation of transport vesicles to their fusion with membranes. Rabs cycle between an inactive GDP-bound form and an active GTP-bound form that is able to recruit to membranes different sets of downstream effectors directly responsible for vesicle formation, movement, tethering and fusion. The protein is Ras-related protein Rab-5C of Mus musculus (Mouse).